Reading from the N-terminus, the 690-residue chain is Eukaryotic translation initiation factor 3 subunit B (690 aa).

Over residues 1–11 the composition is skewed to basic and acidic residues; the sequence is MAKKKSEDHSG. Residues 1-33 form a disordered region; it reads MAKKKSEDHSGADANDSDYNEEPNFDDPPNFVD. Acidic residues predominate over residues 15–25; sequence NDSDYNEEPNF. Positions 57–141 constitute an RRM domain; sequence SVVVVDNMPK…YTFAVNLFTD (85 aa). WD repeat units lie at residues 207–246, 292–331, 334–369, 442–484, and 530–575; these read TRERFTDTFVKWSPLGTYVVTFHKPGVAIWGGSSFQKIQK, GDGMSVLSMFRWSHDDKYVARMGESSIHIYETPSFYLLDL, IKIPGIRGFSWSPTDNVIAYWVEEQNQIPARVTLMK, EIRE…KPSL, and PDHF…IKRT. Residues 613–646 are a coiled coil; it reads EQKDRLRLTRASKELLEKRAQLRETFMEYRNKRI.

It belongs to the eIF-3 subunit B family. Component of the eukaryotic translation initiation factor 3 (eIF-3) complex. The eIF-3 complex interacts with pix. Interacts with mxt.

The protein localises to the cytoplasm. Functionally, RNA-binding component of the eukaryotic translation initiation factor 3 (eIF-3) complex, which is involved in protein synthesis of a specialized repertoire of mRNAs and, together with other initiation factors, stimulates binding of mRNA and methionyl-tRNAi to the 40S ribosome. The eIF-3 complex specifically targets and initiates translation of a subset of mRNAs involved in cell proliferation. This Drosophila grimshawi (Hawaiian fruit fly) protein is Eukaryotic translation initiation factor 3 subunit B.